Consider the following 89-residue polypeptide: Histone H3.v2 (89 aa).

Belongs to the histone H3 family.

This chain is Histone H3.v2 (H3v2), found in Dictyostelium discoideum (Social amoeba).